A 173-amino-acid chain; its full sequence is Putative pre-16S rRNA nuclease (173 aa).

It belongs to the YqgF nuclease family.

It is found in the cytoplasm. Could be a nuclease involved in processing of the 5'-end of pre-16S rRNA. The protein is Putative pre-16S rRNA nuclease of Psychrobacter cryohalolentis (strain ATCC BAA-1226 / DSM 17306 / VKM B-2378 / K5).